Consider the following 330-residue polypeptide: Clavaminate synthase-like protein At3g21360 (330 aa).

N-acetylalanine is present on alanine 2. Fe cation is bound by residues histidine 120, glutamate 122, and histidine 313.

Fe cation is required as a cofactor.

This is Clavaminate synthase-like protein At3g21360 from Arabidopsis thaliana (Mouse-ear cress).